The primary structure comprises 476 residues: RuvB-like helicase 2 (476 aa).

V72–T80 lines the ATP pocket.

The protein belongs to the RuvB family. May form heterododecamers with RVB1. Component of the SWR1 chromatin remodeling complex, the INO80 chromatin remodeling complex, and of the R2TP complex.

The protein resides in the nucleus. It carries out the reaction ATP + H2O = ADP + phosphate + H(+). Its function is as follows. DNA helicase which participates in several chromatin remodeling complexes, including the SWR1 and the INO80 complexes. The SWR1 complex mediates the ATP-dependent exchange of histone H2A for the H2A variant HZT1 leading to transcriptional regulation of selected genes by chromatin remodeling. The INO80 complex remodels chromatin by shifting nucleosomes and is involved in DNA repair. Also involved in pre-rRNA processing. The chain is RuvB-like helicase 2 (RVB2) from Mycosarcoma maydis (Corn smut fungus).